Here is a 636-residue protein sequence, read N- to C-terminus: Dehydrogenase ARMGADRAFT_1018426 (636 aa).

The first 19 residues, 1–19, serve as a signal peptide directing secretion; sequence MPALTYLLLAAIGASTVHS. Residues 49–50 and 70–71 each bind FAD; these read TA and EG. N99 is a glycosylation site (N-linked (GlcNAc...) asparagine). Residues W104 and 134-137 contribute to the FAD site; that span reads NGLT. N253 carries N-linked (GlcNAc...) asparagine glycosylation. An FAD-binding site is contributed by V280. N-linked (GlcNAc...) asparagine glycans are attached at residues N333, N380, N394, and N498. The active-site Proton acceptor is the H570. Residues A603 and 614–615 each bind FAD; that span reads PS.

The protein belongs to the GMC oxidoreductase family. It depends on FAD as a cofactor.

It participates in secondary metabolite biosynthesis. In terms of biological role, dehydrogenase, part of the gene cluster that mediates the biosynthesis of melleolides, a range of antifungal and phytotoxic polyketide derivatives composed of an orsellinic acid (OA) moiety esterified to various sesquiterpene alcohols. The first step in melleolides biosynthesis is performed by the delta(6)-protoilludene synthase PRO1 which catalyzes the cyclization of farnesyl diphosphate to protoilludene. The orsellinic acid synthase armB produces OA by condensing acetyl-CoA with 3 malonyl-CoA units in a three-round chain elongation reaction folowed by a C2-C7 ring closure. ArmB further catalyzes the trans-esterification of OA to the various sesquiterpene alcohols resulting from the hydroxylation of protoilludene. The melleolides cluster also includes 5 cytochrome P450 monooxygenases, 4 NAD(+)-dependent oxidoreductases, one flavin-dependent oxidoreductase, and one O-methyltransferase. The cytochrome P450 monooxygenases may be involved in protoilludene hydroxylation to elaborate melleolides with multiple alcohol groups, such as melleolide D, which carries alcohol functionalities at C-4, C-5, C-10, and C-13. The role of the NAD(+)-dependent enzymes remains unknown. Numerous melleolides, including arnamial, show 5'-O-methylation of the aromatic moiety which may be catalyzed by the methyltransferase encoded in the cluster. The flavin-dependent oxidoreductase might represent the dehydrogenase yielding the aldehyde in position 1 of arnamial and other melleolides. Finally, several halogenase localized outside of the cluster, are able to catalyze the transfer of a single chlorine atom to the melleolide backbone, resulting in a 6'-chloromelleolide product. The polypeptide is Dehydrogenase ARMGADRAFT_1018426 (Armillaria gallica (Bulbous honey fungus)).